The chain runs to 367 residues: sn-glycerol-3-phosphate import ATP-binding protein UgpC (367 aa).

The ABC transporter domain occupies 4-235 (LSLRNVQKTY…PASTFVAGFI (232 aa)). 37-44 (GPSGCGKS) is a binding site for ATP.

Belongs to the ABC transporter superfamily. sn-glycerol-3-phosphate importer (TC 3.A.1.1.3) family. As to quaternary structure, the complex is composed of two ATP-binding proteins (UgpC), two transmembrane proteins (UgpA and UgpE) and a solute-binding protein (UgpB).

The protein localises to the cell inner membrane. The enzyme catalyses sn-glycerol 3-phosphate(out) + ATP + H2O = sn-glycerol 3-phosphate(in) + ADP + phosphate + H(+). Functionally, part of the ABC transporter complex UgpBAEC involved in sn-glycerol-3-phosphate (G3P) import. Responsible for energy coupling to the transport system. The protein is sn-glycerol-3-phosphate import ATP-binding protein UgpC of Cupriavidus metallidurans (strain ATCC 43123 / DSM 2839 / NBRC 102507 / CH34) (Ralstonia metallidurans).